The chain runs to 122 residues: Acidic phospholipase A2 CbIalpha (122 aa).

7 disulfides stabilise this stretch: C26–C115, C28–C44, C43–C95, C49–C122, C50–C88, C57–C81, and C75–C86. Positions 27, 29, and 31 each coordinate Ca(2+). Residue H47 is part of the active site. D48 is a binding site for Ca(2+). Residue D89 is part of the active site.

Belongs to the phospholipase A2 family. Group II subfamily. D49 sub-subfamily. Heterodimer of an acidic subunit (CbIalpha or CbIbeta) and a basic subunit (CbII). The acidic subunit is non-toxic, and increases the toxicity of the basic subunit. Requires Ca(2+) as cofactor. In terms of tissue distribution, expressed by the venom gland.

It localises to the secreted. It carries out the reaction a 1,2-diacyl-sn-glycero-3-phosphocholine + H2O = a 1-acyl-sn-glycero-3-phosphocholine + a fatty acid + H(+). Its function is as follows. Heterodimer: presynaptic neurotoxin. In terms of biological role, monomer: Snake venom phospholipase A2 (PLA2) is inactive towards micellar phosphatidylcholine but is weakly active towards non-micellar dithiolecithin. PLA2 catalyzes the calcium-dependent hydrolysis of the 2-acyl groups in 3-sn-phosphoglycerides. In Pseudocerastes fieldi (Field's horned viper), this protein is Acidic phospholipase A2 CbIalpha.